Here is a 216-residue protein sequence, read N- to C-terminus: Large ribosomal subunit protein bL25 (216 aa).

A disordered region spans residues 191–216 (LVSAESEEDEDAPAADEVPATEVSEE). The segment covering 195 to 204 (ESEEDEDAPA) has biased composition (acidic residues).

This sequence belongs to the bacterial ribosomal protein bL25 family. CTC subfamily. In terms of assembly, part of the 50S ribosomal subunit; part of the 5S rRNA/L5/L18/L25 subcomplex. Contacts the 5S rRNA. Binds to the 5S rRNA independently of L5 and L18.

Its function is as follows. This is one of the proteins that binds to the 5S RNA in the ribosome where it forms part of the central protuberance. The polypeptide is Large ribosomal subunit protein bL25 (Jannaschia sp. (strain CCS1)).